A 2648-amino-acid chain; its full sequence is MDGIDPETLLEWLQTGIGDERDLQLMALEQLCMLLLMADNIDRCFESCPPRTFIPALCKIFIDETAPDNVLEVTARAITYYLDVSNECTRRITQVDGAVKAICTRLAAADISDRSSKDLAEQCVKLLEHVCQRETMAVYDAGGINAMLTLVRVHGTQVHKDTMHSAMSVVTRLCGKMEPTDPELGKCAESLGALLEHEDPKVSESALRCFAALTDRFVRKMMDPAELAMHSNLVEHLISIMVASNDENSPTTASANILSIVLSLIGNLCRGSSLITEKVLTSPNMITGLKATLTNKEERVVTDGLRFCDLLLVLLCEGRSALPLTSVVSGDYAAGSGAERVHRQLIDAIRQKDLTALVDAIESGQVDVNFADDVGQSLTNWASAFGSIEMVQYLCDKGSDVNKGHKSSSLHYAACFGRPDVVKLLLQRGANPDLRDEDGKTALDKARERSDDDHNQVANILESPSAFMRNKEDPKVKASTSKQPGTSTKPELPNPNLVRKVLHQLLPIFCEIFQKSLNGSVRRTSLSLMRKIVENIGDLRQSAVGDGNAPAAQSARKMSTDVSAGAESLVAVVVSVMDQEDDHEGHEQVLLILESLLEKDAELWVIELVRLGVFERVEAMAKEPPKGLEEVLNAIHLEGRSRVTPMEIDFENQPSSSTAVPTANDIMDTTVPSSSGGADAESNSNPSTIEMADPESSTPSSSTQQSISKPKATASSTASSAILQVVSKLSSVASLDKSAAAVDKKPTKTVLSQGTPYRWKEWRIVRGTTSLFIWSDVLLIELPFQSNGWFRYLADNDSHVQFVTGTASVDQQMTEEEKDNFQKTERREMVSRWNAVKGVFDDDWSSVPIAVLGIPSNAKKVSQKLEVPAWELWSSKSSELQIKSISSSAPTGQANTMLTTIKDDAGGFLFETGTGRKTNVMPEHALPSDFHTGWSSHGVSTRKMKFRQDIQKRKVQELAWKLWNDHLKEAHAKPREALVRLENAARTIESTIRHVKAQSNFKHRNVKQPRIERVQEYCAAISTLHESIVDDRRLSTFEFSVSGIVPALFGLLSMMEKFPDSFPSRIFKEQFSKGEALSYLALKIVAVLEANEKFPQHLYDSPGGSSFGLQLLSRRVRTKLEMLPRADGKENNDENLVNKTGKIVKCEPLASVGAIRAYLHRMVTRQWHDRERANYRYVKEIQELKTKGKSIELRHVSDFDENGVIYWIGTNGRAAPLWTNPATVKAVKITCSDTRQPFGKPEDLLSRDQNPINCHTSDDKNAHFTIDLGLFVVPTSYSLRHSRGYGRSALRNWMLQGSVDAKRWENVIVHTDDKGLGEPGSTATWHVGEKGTTAFRFFRIAQNGKNSSGQTHYLSCSGFEIYGDIVDVVTEAICEDPPKKDSPAGTSSTPGSSSSAALPPLTKEQVLEMLPARENNNRLKSGLSLETVTSMLQRSRHRSRGSYKISESKSKVVRGKDWRWEDQDGGEGKFGRITSPPESGWVDVTWDNGNANSYRFGANGNFDIERVTSTGHRYSTPSLASHVPTSVMEAVRRNRAFYTPKTTGGPPSSSVFGTSSSAGSSRGAASALSRFASVKNTTPAGTPSSGGSSGGAIGKKSMSTTNLVDERQKTSGPSVASTGQAASAESLQHQTPSLENLLARAMPHAFGRIAENQEPEDEPMGGEESDSAASMRSAASSNSQMSMGSSSQQQQQQDSDMTPRDSAGTPSTPRDDKNQTLSVSAPDLAAARQRQASAETDGDADADETNSEDKTVGADDAMEEDDEEEETMEDEEDDDDDDDDESSNENQEKLVELLGGERGLFDKLKEVITGESLSDASSSAKDATTNEAQKKGGKKPKKWFKKMSSYTDVLKGLMQNRYPVALLDPAAAGIEMDEMMDDDDYYDFSEDGPDDGDSVEDEVAAHLGMPVDSFASMVAARTPITWRQFSELMSGSNRERAAMARAVASSRGSPWEDDATVKCTFEALIPAFDPRPGRSNVNQTLEVELPTVVKDFGSTKASSSKIDKDDQMRFFLRGPNMSGVDNVTIEMNDDSASLFRYMQIINNSVNWATKSDRSRRIWEPTYSICYCSADQTNVEVSKIPDEESSTPCQVNQCLETIGLLSRIQQAMPEAEITPNVFISDKLTLKVTQVLSDALVVAARSLPEWCSRLVYKYPCLFTVETRNMYMQATAFGVSRTIVWLQQRRDAAVERARGSAQAGNSSAARQHDRYHEYRVGRLRHERVKVTRAEETLLDQAIRLMKFHADRKAVLEIEYTNEEGTGLGPTLEFYALVAAELQRKSLALWVCDDDDTHASKSGEEREVDLGEGKKPIGYYVRRVGGLFPAPLPPGTDETKRAADMFRVLGVFLAKVLLDGRLVDLPLSRPFLKLLVHPQIGDDARGPNLHKILSLDDFEEVNPVKGSFLKELRALAQRKRLIENDTSIDSNSKRRKIAELKLHIKGSTCRVEDLALNFTVNPPSKVFQYAEMELVDGGSDIDVTIDNVEQYVEKCEEFYLNTGIAYQMRAFRDGFDRVFPLRTLRAYSPEEVQRLLSGEQCPEWSRDDILNYTEPKLGYTRESPGFLRFVDVMEALTAQERKNFLQFATGCSSLPPGGLANLHPRLTIVRKVESGDGSYPSVNTCVHYLKLPEYSSSAILRERLLTAINEKGFHLN.

ANK repeat units follow at residues 374–403 (VGQSLTNWASAFGSIEMVQYLCDKGSDVNK) and 405–434 (HKSSSLHYAACFGRPDVVKLLLQRGANPDL). Over residues 433–455 (DLRDEDGKTALDKARERSDDDHN) the composition is skewed to basic and acidic residues. Disordered regions lie at residues 433 to 494 (DLRD…ELPN), 645 to 714 (PMEI…KATA), and 1376 to 1400 (DPPKKDSPAGTSSTPGSSSSAALPP). Polar residues-rich tracts occupy residues 478-489 (ASTSKQPGTSTK), 652-661 (NQPSSSTAVP), and 670-688 (TVPSSSGGADAESNSNPST). Low complexity-rich tracts occupy residues 696-714 (SSTPSSSTQQSISKPKATA) and 1383-1400 (PAGTSSTPGSSSSAALPP). Residues 1438–1510 (RSRGSYKISE…NFDIERVTST (73 aa)) form the MIB/HERC2 domain. Disordered regions lie at residues 1538-1562 (YTPKTTGGPPSSSVFGTSSSAGSSR), 1575-1629 (KNTT…SLQH), 1652-1796 (NQEP…LLGG), and 1811-1836 (ESLSDASSSAKDATTNEAQKKGGKKP). Low complexity-rich tracts occupy residues 1543–1562 (TGGPPSSSVFGTSSSAGSSR) and 1575–1586 (KNTTPAGTPSSG). Over residues 1610–1629 (TSGPSVASTGQAASAESLQH) the composition is skewed to polar residues. The segment covering 1653–1666 (QEPEDEPMGGEESD) has biased composition (acidic residues). The segment covering 1667–1696 (SAASMRSAASSNSQMSMGSSSQQQQQQDSD) has biased composition (low complexity). Composition is skewed to acidic residues over residues 1736-1746 (TDGDADADETN) and 1756-1783 (DAMEEDDEEEETMEDEEDDDDDDDDESS). A compositionally biased stretch (low complexity) spans 1812–1823 (SLSDASSSAKDA). The HECT domain occupies 2240–2648 (FHADRKAVLE…AINEKGFHLN (409 aa)). Cys2617 (glycyl thioester intermediate) is an active-site residue.

The protein belongs to the UPL family. K-HECT subfamily. As to expression, expressed in most tissues, including hypodermis, muscle, intestine, vulva, and neurons.

The catalysed reaction is S-ubiquitinyl-[E2 ubiquitin-conjugating enzyme]-L-cysteine + [acceptor protein]-L-lysine = [E2 ubiquitin-conjugating enzyme]-L-cysteine + N(6)-ubiquitinyl-[acceptor protein]-L-lysine.. The protein operates within protein modification; protein ubiquitination. In terms of biological role, E3 ubiquitin-protein ligase which accepts ubiquitin from an E2 ubiquitin-conjugating enzyme in the form of a thioester and then directly transfers the ubiquitin to targeted substrates. Involved in the ubiquitination and proteasomal-mediated degradation of cytoplasmic and mitochondrial proteins. Positively regulates lin-12 activity in the anchor cell (AC)/vulval precursor (VU) cell fate decision. Negatively regulates glp-1 activity in germline proliferation. May play a role in the formation of fibrous organelles, a hemidesmosome-like structure attaching muscles to the epidermis. Regulates germline DNA double-strand-break repair and apoptosis in response to DNA damage by recruiting E4 ubiquitin-protein ligase ufd-2 to DNA repair foci. The protein is E3 ubiquitin-protein ligase hecd-1 of Caenorhabditis elegans.